A 313-amino-acid polypeptide reads, in one-letter code: Deoxyribonucleoside regulator (313 aa).

The segment at residues 23–42 is a DNA-binding region (H-T-H motif); that stretch reads QQQIAEQLNISRPTVSRLLQ.

This sequence belongs to the SorC transcriptional regulatory family. In terms of assembly, homooctamer.

In terms of biological role, negative regulator of the dra-nupC-pdp operon. DeoR binds cooperatively to the operator DNA, which consists of a palindrome and a direct repeat sequence located 3' to the palindrome. This is Deoxyribonucleoside regulator from Bacillus subtilis (strain 168).